Here is a 114-residue protein sequence, read N- to C-terminus: UPF0342 protein lp_1415 (114 aa).

It belongs to the UPF0342 family.

The chain is UPF0342 protein lp_1415 from Lactiplantibacillus plantarum (strain ATCC BAA-793 / NCIMB 8826 / WCFS1) (Lactobacillus plantarum).